Consider the following 395-residue polypeptide: NADH-quinone oxidoreductase subunit D (395 aa).

This sequence belongs to the complex I 49 kDa subunit family. As to quaternary structure, NDH-1 is composed of 14 different subunits. Subunits NuoB, C, D, E, F, and G constitute the peripheral sector of the complex.

It is found in the cell inner membrane. The enzyme catalyses a quinone + NADH + 5 H(+)(in) = a quinol + NAD(+) + 4 H(+)(out). Functionally, NDH-1 shuttles electrons from NADH, via FMN and iron-sulfur (Fe-S) centers, to quinones in the respiratory chain. The immediate electron acceptor for the enzyme in this species is believed to be ubiquinone. Couples the redox reaction to proton translocation (for every two electrons transferred, four hydrogen ions are translocated across the cytoplasmic membrane), and thus conserves the redox energy in a proton gradient. This Anaplasma phagocytophilum (strain HZ) protein is NADH-quinone oxidoreductase subunit D.